A 199-amino-acid chain; its full sequence is Protein-methionine-sulfoxide reductase heme-binding subunit MsrQ (199 aa).

Helical transmembrane passes span 13 to 33 (VLLH…VDQG), 79 to 99 (LLGL…ALLE), 120 to 140 (LGII…QIMM), 147 to 167 (WQKL…HYLW), and 169 to 189 (VKTL…LLLL).

It belongs to the MsrQ family. Heterodimer of a catalytic subunit (MsrP) and a heme-binding subunit (MsrQ). The cofactor is FMN. Heme b is required as a cofactor.

Its subcellular location is the cell inner membrane. Functionally, part of the MsrPQ system that repairs oxidized periplasmic proteins containing methionine sulfoxide residues (Met-O), using respiratory chain electrons. Thus protects these proteins from oxidative-stress damage caused by reactive species of oxygen and chlorine generated by the host defense mechanisms. MsrPQ is essential for the maintenance of envelope integrity under bleach stress, rescuing a wide series of structurally unrelated periplasmic proteins from methionine oxidation. MsrQ provides electrons for reduction to the reductase catalytic subunit MsrP, using the quinone pool of the respiratory chain. The sequence is that of Protein-methionine-sulfoxide reductase heme-binding subunit MsrQ from Pectobacterium atrosepticum (strain SCRI 1043 / ATCC BAA-672) (Erwinia carotovora subsp. atroseptica).